Reading from the N-terminus, the 183-residue chain is ATP-dependent protease subunit HslV (183 aa).

T13 is an active-site residue. The Na(+) site is built by G168, C171, and T174.

Belongs to the peptidase T1B family. HslV subfamily. As to quaternary structure, a double ring-shaped homohexamer of HslV is capped on each side by a ring-shaped HslU homohexamer. The assembly of the HslU/HslV complex is dependent on binding of ATP.

Its subcellular location is the cytoplasm. It catalyses the reaction ATP-dependent cleavage of peptide bonds with broad specificity.. Its activity is regulated as follows. Allosterically activated by HslU binding. Its function is as follows. Protease subunit of a proteasome-like degradation complex believed to be a general protein degrading machinery. This chain is ATP-dependent protease subunit HslV, found in Xanthomonas euvesicatoria pv. vesicatoria (strain 85-10) (Xanthomonas campestris pv. vesicatoria).